The following is a 352-amino-acid chain: UDP-N-acetylglucosamine--N-acetylmuramyl-(pentapeptide) pyrophosphoryl-undecaprenol N-acetylglucosamine transferase (352 aa).

UDP-N-acetyl-alpha-D-glucosamine is bound by residues serine 195 and glutamine 287.

It belongs to the glycosyltransferase 28 family. MurG subfamily.

Its subcellular location is the cell membrane. The catalysed reaction is Mur2Ac(oyl-L-Ala-gamma-D-Glu-L-Lys-D-Ala-D-Ala)-di-trans,octa-cis-undecaprenyl diphosphate + UDP-N-acetyl-alpha-D-glucosamine = beta-D-GlcNAc-(1-&gt;4)-Mur2Ac(oyl-L-Ala-gamma-D-Glu-L-Lys-D-Ala-D-Ala)-di-trans,octa-cis-undecaprenyl diphosphate + UDP + H(+). It participates in cell wall biogenesis; peptidoglycan biosynthesis. In terms of biological role, cell wall formation. Catalyzes the transfer of a GlcNAc subunit on undecaprenyl-pyrophosphoryl-MurNAc-pentapeptide (lipid intermediate I) to form undecaprenyl-pyrophosphoryl-MurNAc-(pentapeptide)GlcNAc (lipid intermediate II). This chain is UDP-N-acetylglucosamine--N-acetylmuramyl-(pentapeptide) pyrophosphoryl-undecaprenol N-acetylglucosamine transferase, found in Streptococcus pneumoniae (strain ATCC BAA-255 / R6).